The following is a 129-amino-acid chain: Glycine cleavage system H protein (129 aa).

In terms of domain architecture, Lipoyl-binding spans 24-106; the sequence is TYTVGITEHA…YAGGWIFKIK (83 aa). An N6-lipoyllysine modification is found at Lys65.

Belongs to the GcvH family. The glycine cleavage system is composed of four proteins: P, T, L and H. The cofactor is (R)-lipoate.

Functionally, the glycine cleavage system catalyzes the degradation of glycine. The H protein shuttles the methylamine group of glycine from the P protein to the T protein. The polypeptide is Glycine cleavage system H protein (Escherichia coli O127:H6 (strain E2348/69 / EPEC)).